A 286-amino-acid chain; its full sequence is 3-methyl-2-oxobutanoate hydroxymethyltransferase (286 aa).

Residues Asp-67 and Asp-106 each contribute to the Mg(2+) site. Residues 67-68 (DS), Asp-106, and Lys-136 contribute to the 3-methyl-2-oxobutanoate site. Glu-138 contributes to the Mg(2+) binding site. Glu-204 acts as the Proton acceptor in catalysis.

This sequence belongs to the PanB family. In terms of assembly, homodecamer; pentamer of dimers. It depends on Mg(2+) as a cofactor.

The protein localises to the cytoplasm. The catalysed reaction is 3-methyl-2-oxobutanoate + (6R)-5,10-methylene-5,6,7,8-tetrahydrofolate + H2O = 2-dehydropantoate + (6S)-5,6,7,8-tetrahydrofolate. It functions in the pathway cofactor biosynthesis; (R)-pantothenate biosynthesis; (R)-pantoate from 3-methyl-2-oxobutanoate: step 1/2. In terms of biological role, catalyzes the reversible reaction in which hydroxymethyl group from 5,10-methylenetetrahydrofolate is transferred onto alpha-ketoisovalerate to form ketopantoate. The polypeptide is 3-methyl-2-oxobutanoate hydroxymethyltransferase (Mycobacterium leprae (strain TN)).